Reading from the N-terminus, the 228-residue chain is UPF0173 metal-dependent hydrolase PTH_1415 (228 aa).

This sequence belongs to the UPF0173 family.

The protein is UPF0173 metal-dependent hydrolase PTH_1415 of Pelotomaculum thermopropionicum (strain DSM 13744 / JCM 10971 / SI).